The chain runs to 427 residues: Isoprenylcysteine alpha-carbonyl methylesterase ICME (427 aa).

The interval 26-59 (EVLPDEDSDRTTLLNGEPLRRRVSGKSPVDEGPR) is disordered. The next 2 helical transmembrane spans lie at 102-122 (LLAL…VAYS) and 157-177 (VVVF…GSLL). Residues 163-165 (GGA) and 234-236 (QSA) contribute to the substrate site. Active-site residues include serine 235, aspartate 336, and histidine 368.

Belongs to the AB hydrolase superfamily. Isoprenylcysteine methylesterase family. Expressed in roots, rosette and cauline leaves, stems, flowers and siliques.

Its subcellular location is the endoplasmic reticulum membrane. The protein localises to the golgi apparatus membrane. The enzyme catalyses [protein]-C-terminal S-[(2E,6E)-farnesyl]-L-cysteine methyl ester + H2O = [protein]-C-terminal S-[(2E,6E)-farnesyl]-L-cysteine + methanol + H(+). In terms of biological role, catalyzes the demethylation of isoprenylcysteine methylesters. In vitro, is specific for N-acetyl-S-farnesyl-L-cysteine methyl ester (AFCme) and has low activity toward N-acetyl-S-geranyl-L-cysteine methyl ester (AGCme). Acts as a positive regulator of ABA signaling. May be involved in the demethylation and inactivation of isoprenylated negative regulators of abscisic acid (ABA) signaling. Carboxyl methylation is a reversible and potentially regulated step in the post-translational modification of prenylated proteins. The chain is Isoprenylcysteine alpha-carbonyl methylesterase ICME from Arabidopsis thaliana (Mouse-ear cress).